A 196-amino-acid chain; its full sequence is V-type proton ATPase subunit E (196 aa).

It belongs to the V-ATPase E subunit family.

In terms of biological role, produces ATP from ADP in the presence of a proton gradient across the membrane. The sequence is that of V-type proton ATPase subunit E from Clostridium botulinum (strain Eklund 17B / Type B).